The sequence spans 57 residues: Sperm histone (57 aa).

The segment at 1–57 (MARYRRTRTRSRSRRRRRSRRRRSSRRRRYGRSRRSYRSVGRRRRRYGRRRRRRRRY) is disordered. Phosphothreonine is present on threonine 9.

It belongs to the protamine P1 family. As to expression, testis.

Its subcellular location is the nucleus. The protein localises to the chromosome. In terms of biological role, protamines substitute for histones in the chromatin of sperm during the haploid phase of spermatogenesis. They compact sperm DNA into a highly condensed, stable and inactive complex. This Coturnix japonica (Japanese quail) protein is Sperm histone.